The sequence spans 779 residues: Phosphatidylinositol 4-phosphate 5-kinase 4 (779 aa).

The segment at 20–61 is disordered; sequence QQAKKRANSIFGTVSVAPQTDDDATTTTEENDDETSTNRSSI. Residues 39–54 show a composition bias toward acidic residues; the sequence is TDDDATTTTEENDDET. MORN repeat units lie at residues 77–99, 100–122, 123–145, 146–168, 169–191, 192–214, 215–237, and 238–259; these read YTGQ…DGCM, YIGD…SGAT, YEGE…SGDT, YKGQ…NGDV, YDGE…DGSY, YMGE…DGNR, YDGF…DGSF, and YVGH…SGDD. The 394-residue stretch at 382 to 775 folds into the PIPK domain; sequence TISKGHRNYE…RFRDFIFKVF (394 aa). The activation loop stretch occupies residues 735-756; sequence YDISKKLEHAYKSIQYDPTSIS.

The catalysed reaction is a 1,2-diacyl-sn-glycero-3-phospho-(1D-myo-inositol 4-phosphate) + ATP = a 1,2-diacyl-sn-glycero-3-phospho-(1D-myo-inositol-4,5-bisphosphate) + ADP + H(+). This is Phosphatidylinositol 4-phosphate 5-kinase 4 (PIP5K4) from Arabidopsis thaliana (Mouse-ear cress).